Here is a 75-residue protein sequence, read N- to C-terminus: Small ribosomal subunit protein bS18 (75 aa).

The protein belongs to the bacterial ribosomal protein bS18 family. Part of the 30S ribosomal subunit. Forms a tight heterodimer with protein bS6.

Functionally, binds as a heterodimer with protein bS6 to the central domain of the 16S rRNA, where it helps stabilize the platform of the 30S subunit. The sequence is that of Small ribosomal subunit protein bS18 from Psychrobacter sp. (strain PRwf-1).